The sequence spans 286 residues: Gap junction alpha-6 protein (286 aa).

At 1 to 23 (MSDWSALHQLLEKVQPYSTAGGK) the chain is on the cytoplasmic side. The chain crosses the membrane as a helical span at residues 24 to 41 (VWIKVLFIFRILLLGTAI). The Extracellular portion of the chain corresponds to 42–76 (ESAWSDEQFEFHCNTQQPGCENVCYDQAFPISHVR). A helical membrane pass occupies residues 77-99 (LWVLQVIFVSVPTLLHLAHVYYV). The Cytoplasmic segment spans residues 100-151 (IRQNEKLKKQEEEELKVAHFNGASGERRLQKHTGKHIKCGSKEHGNRKMRGR). The helical transmembrane segment at 152 to 174 (LLLTYMASIFFKSVFEVAFLLIQ) threads the bilayer. At 175–209 (WYLYGFTLSAVYICEQSPCPHRVDCFLSRPTEKTI) the chain is on the extracellular side. Residues 210-232 (FILFMLVVSMVSFVLNVIELFYV) form a helical membrane-spanning segment. Topologically, residues 233-286 (LFKAIKNHLGNEKEEVYCNPVELQKPSCVSSSAVLTTICSSDQVVPVGLSSFYM) are cytoplasmic.

It belongs to the connexin family. Alpha-type (group II) subfamily. As to quaternary structure, a connexon is composed of a hexamer of connexins. In terms of tissue distribution, expressed in testis.

It is found in the cell membrane. Its subcellular location is the cell junction. The protein localises to the gap junction. Functionally, one gap junction consists of a cluster of closely packed pairs of transmembrane channels, the connexons, through which materials of low MW diffuse from one cell to a neighboring cell. The sequence is that of Gap junction alpha-6 protein (Gja6) from Rattus norvegicus (Rat).